The primary structure comprises 314 residues: Lipoyl synthase (314 aa).

Residues 1–24 (MMDTPIIRHPEKVRRPDNPSPRKP) are disordered. [4Fe-4S] cluster-binding residues include C53, C58, C64, C79, C83, C86, and S293. Residues 65 to 282 (WKRRHATFMI…ADIARGKGFL (218 aa)) enclose the Radical SAM core domain. The segment covering 294-308 (HHADRDFEDLRKARQ) has biased composition (basic and acidic residues). Positions 294–314 (HHADRDFEDLRKARQDAAATK) are disordered.

It belongs to the radical SAM superfamily. Lipoyl synthase family. [4Fe-4S] cluster is required as a cofactor.

The protein localises to the cytoplasm. The enzyme catalyses [[Fe-S] cluster scaffold protein carrying a second [4Fe-4S](2+) cluster] + N(6)-octanoyl-L-lysyl-[protein] + 2 oxidized [2Fe-2S]-[ferredoxin] + 2 S-adenosyl-L-methionine + 4 H(+) = [[Fe-S] cluster scaffold protein] + N(6)-[(R)-dihydrolipoyl]-L-lysyl-[protein] + 4 Fe(3+) + 2 hydrogen sulfide + 2 5'-deoxyadenosine + 2 L-methionine + 2 reduced [2Fe-2S]-[ferredoxin]. Its pathway is protein modification; protein lipoylation via endogenous pathway; protein N(6)-(lipoyl)lysine from octanoyl-[acyl-carrier-protein]: step 2/2. In terms of biological role, catalyzes the radical-mediated insertion of two sulfur atoms into the C-6 and C-8 positions of the octanoyl moiety bound to the lipoyl domains of lipoate-dependent enzymes, thereby converting the octanoylated domains into lipoylated derivatives. In Rhodospirillum rubrum (strain ATCC 11170 / ATH 1.1.1 / DSM 467 / LMG 4362 / NCIMB 8255 / S1), this protein is Lipoyl synthase.